Here is a 486-residue protein sequence, read N- to C-terminus: Protein nucleotidyltransferase YdiU (486 aa).

8 residues coordinate ATP: Gly89, Gly91, Arg92, Lys112, Asp124, Gly125, Arg175, and Arg182. Residue Asp251 is the Proton acceptor of the active site. Mg(2+) contacts are provided by Asn252 and Asp261. Position 261 (Asp261) interacts with ATP.

This sequence belongs to the SELO family. The cofactor is Mg(2+). Requires Mn(2+) as cofactor.

It catalyses the reaction L-seryl-[protein] + ATP = 3-O-(5'-adenylyl)-L-seryl-[protein] + diphosphate. It carries out the reaction L-threonyl-[protein] + ATP = 3-O-(5'-adenylyl)-L-threonyl-[protein] + diphosphate. The enzyme catalyses L-tyrosyl-[protein] + ATP = O-(5'-adenylyl)-L-tyrosyl-[protein] + diphosphate. The catalysed reaction is L-histidyl-[protein] + UTP = N(tele)-(5'-uridylyl)-L-histidyl-[protein] + diphosphate. It catalyses the reaction L-seryl-[protein] + UTP = O-(5'-uridylyl)-L-seryl-[protein] + diphosphate. It carries out the reaction L-tyrosyl-[protein] + UTP = O-(5'-uridylyl)-L-tyrosyl-[protein] + diphosphate. In terms of biological role, nucleotidyltransferase involved in the post-translational modification of proteins. It can catalyze the addition of adenosine monophosphate (AMP) or uridine monophosphate (UMP) to a protein, resulting in modifications known as AMPylation and UMPylation. In Shouchella clausii (strain KSM-K16) (Alkalihalobacillus clausii), this protein is Protein nucleotidyltransferase YdiU.